The primary structure comprises 215 residues: Orotate phosphoribosyltransferase (215 aa).

Lys-26 serves as a coordination point for 5-phospho-alpha-D-ribose 1-diphosphate. 34-35 (FF) contributes to the orotate binding site. 5-phospho-alpha-D-ribose 1-diphosphate is bound by residues 72–73 (YK), Arg-99, Lys-100, Lys-103, His-105, and 124–132 (DDVITAGTA). Thr-128 and Arg-156 together coordinate orotate.

The protein belongs to the purine/pyrimidine phosphoribosyltransferase family. PyrE subfamily. Homodimer. It depends on Mg(2+) as a cofactor.

The catalysed reaction is orotidine 5'-phosphate + diphosphate = orotate + 5-phospho-alpha-D-ribose 1-diphosphate. It functions in the pathway pyrimidine metabolism; UMP biosynthesis via de novo pathway; UMP from orotate: step 1/2. Functionally, catalyzes the transfer of a ribosyl phosphate group from 5-phosphoribose 1-diphosphate to orotate, leading to the formation of orotidine monophosphate (OMP). This is Orotate phosphoribosyltransferase from Stutzerimonas stutzeri (strain A1501) (Pseudomonas stutzeri).